Consider the following 395-residue polypeptide: Testis-expressed protein 44 (395 aa).

4 disordered regions span residues 1–32 (MALP…PLTA), 46–100 (WQDI…LQVS), 133–215 (KMSQ…SDES), and 235–258 (FPPP…GRRP). Positions 53 to 65 (SFKTATPRAISTS) are enriched in polar residues. The segment covering 87-98 (PLLPSQNPSPLQ) has biased composition (low complexity). Residues 192–207 (SAEEKAEHPKAPHPEA) show a composition bias toward basic and acidic residues. S333 is modified (phosphoserine).

Testis. Detected in germ cells at all stages of the seminiferous epithelium, strong expression in elongating spermatids (at protein level).

Its subcellular location is the cytoplasm. The chain is Testis-expressed protein 44 from Homo sapiens (Human).